Consider the following 532-residue polypeptide: Drimenyl diphosphate synthase (532 aa).

Residues Arg-121, Lys-122, Gln-152, and Trp-154 each coordinate (2E,6E)-farnesyl diphosphate. Glu-158 is a binding site for Mg(2+). PFTB repeat units lie at residues Pro-275–Gly-317, Ile-325–Pro-367, Lys-428–Gly-469, and Leu-475–Leu-518. The active-site Proton donor is Asp-304. Arg-502 is a (2E,6E)-farnesyl diphosphate binding site.

This sequence belongs to the terpene cyclase/mutase family. Mg(2+) serves as cofactor. Requires Ni(2+) as cofactor. It depends on Co(2+) as a cofactor.

It catalyses the reaction (2E,6E)-farnesyl diphosphate = (5S,9S,10S)-drim-7-en-11-yl diphosphate. In terms of biological role, catalyzes the cyclization of farnesyl diphosphate (FPP) to drimenyl diphosphate. This Streptantibioticus cattleyicolor (strain ATCC 35852 / DSM 46488 / JCM 4925 / NBRC 14057 / NRRL 8057) (Streptomyces cattleya) protein is Drimenyl diphosphate synthase.